A 97-amino-acid chain; its full sequence is Exodeoxyribonuclease 7 small subunit (97 aa).

Residues 1–22 (MAKTASPGATPPDNGTEPLPDN) form a disordered region.

Belongs to the XseB family. As to quaternary structure, heterooligomer composed of large and small subunits.

The protein resides in the cytoplasm. The enzyme catalyses Exonucleolytic cleavage in either 5'- to 3'- or 3'- to 5'-direction to yield nucleoside 5'-phosphates.. In terms of biological role, bidirectionally degrades single-stranded DNA into large acid-insoluble oligonucleotides, which are then degraded further into small acid-soluble oligonucleotides. This is Exodeoxyribonuclease 7 small subunit from Burkholderia ambifaria (strain MC40-6).